Reading from the N-terminus, the 523-residue chain is Cryptochrome DASH (523 aa).

The Photolyase/cryptochrome alpha/beta domain maps to Arg6 to Leu142. 2 disordered regions span residues Arg174–Arg211 and Lys486–Val523. A compositionally biased stretch (basic residues) spans Arg496 to Asn510.

The protein belongs to the DNA photolyase class-1 family. It depends on FAD as a cofactor. The cofactor is (6R)-5,10-methylene-5,6,7,8-tetrahydrofolate.

May have a photoreceptor function. Has weak cyclobutyl pyrimidine photolyase activity when expressed in E.coli and when tested in vitro. In Xenopus laevis (African clawed frog), this protein is Cryptochrome DASH (cry-dash).